The sequence spans 325 residues: uncharacterized protein (325 aa).

Positions 1 to 32 (MKQEYIPLDEFPNKSNEGMLNDEGTSSSGLST) are disordered. Over residues 23-32 (EGTSSSGLST) the composition is skewed to low complexity. Residues 135-223 (AEEISNLKTS…LKKREDLLRL (89 aa)) adopt a coiled-coil conformation.

The protein localises to the cytoplasm. Its subcellular location is the cytoskeleton. It localises to the microtubule organizing center. It is found in the spindle pole body. This is an uncharacterized protein from Schizosaccharomyces pombe (strain 972 / ATCC 24843) (Fission yeast).